Here is a 554-residue protein sequence, read N- to C-terminus: Dihydroxy-acid dehydratase (554 aa).

D78 is a binding site for Mg(2+). [2Fe-2S] cluster is bound at residue C119. Mg(2+) contacts are provided by D120 and K121. K121 carries the N6-carboxylysine modification. Position 191 (C191) interacts with [2Fe-2S] cluster. Mg(2+) is bound at residue E444. The active-site Proton acceptor is the S470.

It belongs to the IlvD/Edd family. As to quaternary structure, homodimer. [2Fe-2S] cluster serves as cofactor. Mg(2+) is required as a cofactor.

The enzyme catalyses (2R)-2,3-dihydroxy-3-methylbutanoate = 3-methyl-2-oxobutanoate + H2O. The catalysed reaction is (2R,3R)-2,3-dihydroxy-3-methylpentanoate = (S)-3-methyl-2-oxopentanoate + H2O. The protein operates within amino-acid biosynthesis; L-isoleucine biosynthesis; L-isoleucine from 2-oxobutanoate: step 3/4. It participates in amino-acid biosynthesis; L-valine biosynthesis; L-valine from pyruvate: step 3/4. Functions in the biosynthesis of branched-chain amino acids. Catalyzes the dehydration of (2R,3R)-2,3-dihydroxy-3-methylpentanoate (2,3-dihydroxy-3-methylvalerate) into 2-oxo-3-methylpentanoate (2-oxo-3-methylvalerate) and of (2R)-2,3-dihydroxy-3-methylbutanoate (2,3-dihydroxyisovalerate) into 2-oxo-3-methylbutanoate (2-oxoisovalerate), the penultimate precursor to L-isoleucine and L-valine, respectively. The polypeptide is Dihydroxy-acid dehydratase (Nitratidesulfovibrio vulgaris (strain ATCC 29579 / DSM 644 / CCUG 34227 / NCIMB 8303 / VKM B-1760 / Hildenborough) (Desulfovibrio vulgaris)).